The following is a 237-amino-acid chain: Splicing factor U2AF 35 kDa subunit (237 aa).

Ala2 carries the post-translational modification N-acetylalanine. Residues 12-40 (EKDKVNCSFYFKIGACRHGDRCSRLHNKP) form a C3H1-type 1 zinc finger. N6-methyllysine is present on Lys39. Phosphoserine is present on residues Ser61 and Ser145. The RRM domain maps to 65-147 (LRCAVSDVEM…QPIHAELSPV (83 aa)). The segment at 149-176 (DFREACCRQYEMGECTRGGFCNFMHLKP) adopts a C3H1-type 2 zinc-finger fold. Arg165 is subject to Omega-N-methylarginine. A disordered region spans residues 185–237 (LYGRRRKKHRSRSRSRERRSRSRDRGRGGGGGGGGGRERDRRRSRDRERSGRF). The segment covering 188–208 (RRRKKHRSRSRSRERRSRSRD) has biased composition (basic residues). Over residues 220-237 (GRERDRRRSRDRERSGRF) the composition is skewed to basic and acidic residues.

It belongs to the splicing factor SR family. As to quaternary structure, identified in the spliceosome C complex. Heterodimer with U2AF2. Interacts (via RS domain) with PHF5A (via N-terminus). Interacts with ZRANB2. Interacts with SDE2. Interacts with SF3B1.

It localises to the nucleus. Its subcellular location is the nucleus speckle. In terms of biological role, plays a critical role in both constitutive and enhancer-dependent splicing by mediating protein-protein interactions and protein-RNA interactions required for accurate 3'-splice site selection. Recruits U2 snRNP to the branch point. Directly mediates interactions between U2AF2 and proteins bound to the enhancers and thus may function as a bridge between U2AF2 and the enhancer complex to recruit it to the adjacent intron. This chain is Splicing factor U2AF 35 kDa subunit (U2AF1), found in Bos taurus (Bovine).